Reading from the N-terminus, the 410-residue chain is UDP-N-acetylglucosamine--dolichyl-phosphate N-acetylglucosaminephosphotransferase (410 aa).

The Lumenal segment spans residues 1–10 (MWAFPELPLP). The chain crosses the membrane as a helical span at residues 11–40 (LPLLVNLIGSLLGFVATVTLIPAFRSHFIA). At 41–60 (ARLCGQDLNKLSQQQIPESQ) the chain is on the cytoplasmic side. Residues 46-48 (QDL) and Glu58 each bind UDP-N-acetyl-alpha-D-glucosamine. Residues 61-80 (GVISGAVFLIILFCFIPFPF) traverse the membrane as a helical segment. At 81 to 93 (LNCFVEEQCKAFP) the chain is on the lumenal side. A helical membrane pass occupies residues 94–120 (HHEFVALIGALLAICCMIFLGFADDVL). Topologically, residues 121 to 123 (NLR) are cytoplasmic. The helical transmembrane segment at 124 to 145 (WRHKLLLPTAASLPLLMVYFTN) threads the bilayer. Lys127 is a dolichyl phosphate binding site. Residues 146-168 (FGNTTIVVPKPFRWILGLHLDLG) are Lumenal-facing. N-linked (GlcNAc...) asparagine glycosylation occurs at Asn148. Residues 169–188 (ILYYVYMGLLAVFCTNAINI) traverse the membrane as a helical segment. 180–188 (VFCTNAINI) is a dolichyl phosphate binding site. Asn187 lines the Mg(2+) pocket. At 189-194 (LAGING) the chain is on the cytoplasmic side. UDP-N-acetyl-alpha-D-glucosamine is bound at residue Asn193. The chain crosses the membrane as a helical span at residues 195–215 (LEAGQSLVISASIIVFNLVEL). Residues 216-220 (EGDYR) are Lumenal-facing. The helical transmembrane segment at 221–244 (DDHIFSLYFMIPFFFTTLGLLYHN) threads the bilayer. The Cytoplasmic segment spans residues 245–252 (WYPSRVFV). The helical transmembrane segment at 253 to 271 (GDTFCYFAGMTFAVVGILG) threads the bilayer. Position 254 (Asp254) interacts with Mg(2+). Residues 272–273 (HF) are Lumenal-facing. A helical transmembrane segment spans residues 274-295 (SKTMLLFFMPQVFNFLYSLPQL). The Cytoplasmic portion of the chain corresponds to 296–377 (FHIIPCPRHR…LLLKVFGPIH (82 aa)). 303–305 (RHR) provides a ligand contact to UDP-N-acetyl-alpha-D-glucosamine. Residues 378–402 (ERNLTLLLLLLQVLSSAATFSIRYQ) form a helical membrane-spanning segment. At 403-410 (LVRLFYDV) the chain is on the lumenal side.

This sequence belongs to the glycosyltransferase 4 family. As to quaternary structure, homodimer. It depends on Mg(2+) as a cofactor.

The protein localises to the endoplasmic reticulum membrane. It catalyses the reaction a di-trans,poly-cis-dolichyl phosphate + UDP-N-acetyl-alpha-D-glucosamine = an N-acetyl-alpha-D-glucosaminyl-diphospho-di-trans,poly-cis-dolichol + UMP. It participates in protein modification; protein glycosylation. Its activity is regulated as follows. Inhibited by natural nucleoside antibiotic tunicamycin, which acts as a structural analog and competitor of UDP-GlcNAc. In terms of biological role, UDP-N-acetylglucosamine--dolichyl-phosphate N-acetylglucosaminephosphotransferase that operates in the biosynthetic pathway of dolichol-linked oligosaccharides, the glycan precursors employed in protein asparagine (N)-glycosylation. The assembly of dolichol-linked oligosaccharides begins on the cytosolic side of the endoplasmic reticulum membrane and finishes in its lumen. The sequential addition of sugars to dolichol pyrophosphate produces dolichol-linked oligosaccharides containing fourteen sugars, including two GlcNAcs, nine mannoses and three glucoses. Once assembled, the oligosaccharide is transferred from the lipid to nascent proteins by oligosaccharyltransferases. Catalyzes the initial step of dolichol-linked oligosaccharide biosynthesis, transfering GlcNAc-1-P from cytosolic UDP-GlcNAc onto the carrier lipid dolichyl phosphate (P-dolichol), yielding GlcNAc-P-P-dolichol embedded in the cytoplasmic leaflet of the endoplasmic reticulum membrane. The protein is UDP-N-acetylglucosamine--dolichyl-phosphate N-acetylglucosaminephosphotransferase of Mus musculus (Mouse).